The chain runs to 511 residues: 2,3-bisphosphoglycerate-independent phosphoglycerate mutase (511 aa).

Asp-12 contacts Mn(2+). Position 36 is a phosphotyrosine (Tyr-36). Residue Ser-62 coordinates Mn(2+). Catalysis depends on Ser-62, which acts as the Phosphoserine intermediate. Substrate contacts are provided by residues His-123, 153–154, Arg-185, Arg-191, 261–264, and Lys-336; these read RD and RPDR. Mn(2+) is bound by residues Asp-403, His-407, Asp-444, His-445, and His-462.

It belongs to the BPG-independent phosphoglycerate mutase family. Monomer. It depends on Mn(2+) as a cofactor.

The catalysed reaction is (2R)-2-phosphoglycerate = (2R)-3-phosphoglycerate. It functions in the pathway carbohydrate degradation; glycolysis; pyruvate from D-glyceraldehyde 3-phosphate: step 3/5. Its function is as follows. Catalyzes the interconversion of 2-phosphoglycerate and 3-phosphoglycerate. This is 2,3-bisphosphoglycerate-independent phosphoglycerate mutase from Geobacillus thermodenitrificans (strain NG80-2).